The primary structure comprises 239 residues: tRNA (guanine-N(7)-)-methyltransferase (239 aa).

S-adenosyl-L-methionine-binding residues include Glu-69, Glu-94, Asp-121, and Asp-144. Residue Asp-144 is part of the active site. A substrate-binding site is contributed by Lys-148. Residues Arg-150 to Arg-155 are interaction with RNA. Residues Asp-180 and Thr-217–Glu-220 each bind substrate.

It belongs to the class I-like SAM-binding methyltransferase superfamily. TrmB family. In terms of assembly, monomer.

The catalysed reaction is guanosine(46) in tRNA + S-adenosyl-L-methionine = N(7)-methylguanosine(46) in tRNA + S-adenosyl-L-homocysteine. Its pathway is tRNA modification; N(7)-methylguanine-tRNA biosynthesis. In terms of biological role, catalyzes the formation of N(7)-methylguanine at position 46 (m7G46) in tRNA. The chain is tRNA (guanine-N(7)-)-methyltransferase from Serratia proteamaculans (strain 568).